Here is a 307-residue protein sequence, read N- to C-terminus: Ornithine carbamoyltransferase (307 aa).

Carbamoyl phosphate is bound by residues 50–53, Q77, R101, and 128–131; these read STRT and HPCQ. L-ornithine is bound by residues N160, D224, and 228–229; that span reads SM. Residues 264–265 and R292 each bind carbamoyl phosphate; that span reads CL.

Belongs to the aspartate/ornithine carbamoyltransferase superfamily. OTCase family. In terms of assembly, homotrimer.

Its subcellular location is the cytoplasm. The catalysed reaction is carbamoyl phosphate + L-ornithine = L-citrulline + phosphate + H(+). The protein operates within amino-acid biosynthesis; L-arginine biosynthesis; L-arginine from L-ornithine and carbamoyl phosphate: step 1/3. Functionally, reversibly catalyzes the transfer of the carbamoyl group from carbamoyl phosphate (CP) to the N(epsilon) atom of ornithine (ORN) to produce L-citrulline, which is a substrate for argininosuccinate synthetase, the enzyme involved in the final step in arginine biosynthesis. This Mycobacterium bovis (strain ATCC BAA-935 / AF2122/97) protein is Ornithine carbamoyltransferase (argF).